The chain runs to 146 residues: MIGLVQRVAHACAKVNGEVIGSIDEGLLVLLAVEPDDTERKAERLLDRISGYRIFADPNGKMNLSLKDVGGELLVVSQFTLAADTKKGMRPSFSSAASPELGERLYDHFVEKASALLSRVQTGRFGAEMEITLTNIGPTTFSLRVE.

Positions 137–138 (GP) match the Gly-cisPro motif, important for rejection of L-amino acids motif.

Belongs to the DTD family. In terms of assembly, homodimer.

It localises to the cytoplasm. It catalyses the reaction glycyl-tRNA(Ala) + H2O = tRNA(Ala) + glycine + H(+). It carries out the reaction a D-aminoacyl-tRNA + H2O = a tRNA + a D-alpha-amino acid + H(+). Functionally, an aminoacyl-tRNA editing enzyme that deacylates mischarged D-aminoacyl-tRNAs. Also deacylates mischarged glycyl-tRNA(Ala), protecting cells against glycine mischarging by AlaRS. Acts via tRNA-based rather than protein-based catalysis; rejects L-amino acids rather than detecting D-amino acids in the active site. By recycling D-aminoacyl-tRNA to D-amino acids and free tRNA molecules, this enzyme counteracts the toxicity associated with the formation of D-aminoacyl-tRNA entities in vivo and helps enforce protein L-homochirality. In Hahella chejuensis (strain KCTC 2396), this protein is D-aminoacyl-tRNA deacylase.